The primary structure comprises 371 residues: N-acetyldiaminopimelate deacetylase (371 aa).

D68 is an active-site residue. The Proton acceptor role is filled by E127.

The protein belongs to the peptidase M20A family. N-acetyldiaminopimelate deacetylase subfamily.

It carries out the reaction N-acetyl-(2S,6S)-2,6-diaminopimelate + H2O = (2S,6S)-2,6-diaminopimelate + acetate. Its pathway is amino-acid biosynthesis; L-lysine biosynthesis via DAP pathway; LL-2,6-diaminopimelate from (S)-tetrahydrodipicolinate (acetylase route): step 3/3. In terms of biological role, catalyzes the conversion of N-acetyl-diaminopimelate to diaminopimelate and acetate. In Listeria welshimeri serovar 6b (strain ATCC 35897 / DSM 20650 / CCUG 15529 / CIP 8149 / NCTC 11857 / SLCC 5334 / V8), this protein is N-acetyldiaminopimelate deacetylase.